The sequence spans 256 residues: Post-translational flagellin modification protein A (256 aa).

Residue serine 145 participates in substrate binding. Residue tyrosine 168 is the Proton acceptor of the active site.

It belongs to the short-chain dehydrogenases/reductases (SDR) family.

Required for biosynthesis of LAH modification in the post-translational modification of Campylobacter coli flagellin. This chain is Post-translational flagellin modification protein A (ptmA), found in Campylobacter coli.